The sequence spans 518 residues: ATP synthase subunit alpha (518 aa).

Residue 169–176 (GDRKTGKT) participates in ATP binding.

The protein belongs to the ATPase alpha/beta chains family. F-type ATPases have 2 components, CF(1) - the catalytic core - and CF(0) - the membrane proton channel. CF(1) has five subunits: alpha(3), beta(3), gamma(1), delta(1), epsilon(1). CF(0) has three main subunits: a(1), b(2) and c(9-12). The alpha and beta chains form an alternating ring which encloses part of the gamma chain. CF(1) is attached to CF(0) by a central stalk formed by the gamma and epsilon chains, while a peripheral stalk is formed by the delta and b chains.

Its subcellular location is the cell membrane. The enzyme catalyses ATP + H2O + 4 H(+)(in) = ADP + phosphate + 5 H(+)(out). In terms of biological role, produces ATP from ADP in the presence of a proton gradient across the membrane. The alpha chain is a regulatory subunit. The chain is ATP synthase subunit alpha from Enterococcus faecalis (strain ATCC 700802 / V583).